Here is a 1572-residue protein sequence, read N- to C-terminus: Dynein axonemal assembly factor 8 (1572 aa).

Disordered stretches follow at residues 1 to 21 (MASE…NWSG), 262 to 304 (SEEV…HPQS), 324 to 428 (SLEQ…EILQ), and 849 to 871 (FQNP…SDSE). A compositionally biased stretch (polar residues) spans 324–335 (SLEQNPENPSQR). Basic and acidic residues predominate over residues 336-351 (NEQKEKHHLNKTDHTG). Residues 361–374 (NIQNDSLSDANMSN) show a composition bias toward polar residues. Residues 409–426 (VGREEKDGREEQEKEKEI) are compositionally biased toward basic and acidic residues. The span at 849 to 865 (FQNPYSRSTQPRSANLR) shows a compositional bias: polar residues. The tract at residues 1249 to 1382 (TVLLLKPRIW…IRDIKTFFPE (134 aa)) is NDK.

In terms of assembly, interacts with DNAI2. Expression is enriched in multiciliated cells in the epidermis and the nephrostomes of the pronephros.

The protein localises to the dynein axonemal particle. It is found in the cytoplasm. In cyliated cells, dynein axonemal particle-specific protein required for deployment of ODA to the axoneme. Interacts with outer dynein arm (ODA) subunits. In Xenopus laevis (African clawed frog), this protein is Dynein axonemal assembly factor 8 (dnaaf8).